The primary structure comprises 287 residues: uncharacterized protein (287 aa).

10 consecutive transmembrane segments (helical) span residues 4 to 24 (TTNGWINGFIGVLIFSGSLPA), 36 to 56 (FLTVCRAAIAGVLAGGLLLIF), 66 to 86 (LISLLVVAFGVVIGFPLLTAL), 93 to 113 (SAHAIVFIGLLPLATAVFGVL), 122 to 142 (VFWIFSAAGSLLVAGFALIQG), 148 to 168 (LGDAYMLASIVVCGLGYAEGA), 179 to 199 (VISWALVLSLPLMLPLSFFFT), 208 to 228 (VPALLSLAYVSLFSMLIGFVF), 237 to 259 (GIAAVGQLQLLQPFFGLLLASVI), and 264 to 286 (VGWALVAVNIAVIMCVAAARRFA). EamA domains are found at residues 16–139 (LIFS…GFAL) and 158–284 (VVCG…AARR).

This sequence belongs to the EamA transporter family.

The protein localises to the cell membrane. This is an uncharacterized protein from Bacillus subtilis (strain 168).